Here is a 35-residue protein sequence, read N- to C-terminus: Defensin-B (35 aa).

3 cysteine pairs are disulfide-bonded: cysteine 4-cysteine 25, cysteine 10-cysteine 33, and cysteine 14-cysteine 35.

The protein resides in the secreted. Its function is as follows. Has antibacterial activity against M.luteus and E.coli. This chain is Defensin-B, found in Mytilus edulis (Blue mussel).